Consider the following 331-residue polypeptide: MAIELEDLGLSPDVADVMQRLARVGAGIARIISRNGLERDLGAGVGTNAGGDGQKALDVIADDAFRAALEGSAVAYYASEEQDEVVTLGEGSLALAIDPLDGSSNIDVNVSIGTIFSIFPAAAGPEASFLRPGTEQIAGGYIIYGPQCALVCSFGQGVQHWVLDLDAGIFRRMPDIRPLPAETSEFAINASNYRHWPQPIRAFVDDLVAGAEGPRGKNFNMRWIASLVAETHRILMRGGVFLYPGDERKGYERGRLRHVYECAPIAFLIANVGGRATDGCADILTALPDRLHARTPFVFGCASKVARVAAYHDLACEETSALFGSRGLFRS.

Positions 80, 98, 100, and 101 each coordinate Mg(2+). Substrate-binding positions include 101-104 (DGSS) and N189. Position 261 (E261) interacts with Mg(2+).

The protein belongs to the FBPase class 1 family. As to quaternary structure, homotetramer. Requires Mg(2+) as cofactor.

The protein localises to the cytoplasm. It carries out the reaction beta-D-fructose 1,6-bisphosphate + H2O = beta-D-fructose 6-phosphate + phosphate. It participates in carbohydrate biosynthesis; Calvin cycle. The chain is Fructose-1,6-bisphosphatase class 1 2 from Cereibacter sphaeroides (strain ATCC 17029 / ATH 2.4.9) (Rhodobacter sphaeroides).